The sequence spans 393 residues: NAD(P)H-quinone oxidoreductase subunit H, chloroplastic (393 aa).

The protein belongs to the complex I 49 kDa subunit family. NDH is composed of at least 16 different subunits, 5 of which are encoded in the nucleus.

It localises to the plastid. The protein resides in the chloroplast thylakoid membrane. The enzyme catalyses a plastoquinone + NADH + (n+1) H(+)(in) = a plastoquinol + NAD(+) + n H(+)(out). The catalysed reaction is a plastoquinone + NADPH + (n+1) H(+)(in) = a plastoquinol + NADP(+) + n H(+)(out). Its function is as follows. NDH shuttles electrons from NAD(P)H:plastoquinone, via FMN and iron-sulfur (Fe-S) centers, to quinones in the photosynthetic chain and possibly in a chloroplast respiratory chain. The immediate electron acceptor for the enzyme in this species is believed to be plastoquinone. Couples the redox reaction to proton translocation, and thus conserves the redox energy in a proton gradient. The polypeptide is NAD(P)H-quinone oxidoreductase subunit H, chloroplastic (Amborella trichopoda).